The following is a 333-amino-acid chain: Phenylalanine--tRNA ligase alpha subunit (333 aa).

E254 serves as a coordination point for Mg(2+).

It belongs to the class-II aminoacyl-tRNA synthetase family. Phe-tRNA synthetase alpha subunit type 1 subfamily. As to quaternary structure, tetramer of two alpha and two beta subunits. The cofactor is Mg(2+).

It is found in the cytoplasm. It carries out the reaction tRNA(Phe) + L-phenylalanine + ATP = L-phenylalanyl-tRNA(Phe) + AMP + diphosphate + H(+). The protein is Phenylalanine--tRNA ligase alpha subunit (pheS) of Xylella fastidiosa (strain 9a5c).